A 1186-amino-acid polypeptide reads, in one-letter code: ATP-dependent helicase/deoxyribonuclease subunit B (1186 aa).

Belongs to the helicase family. AddB/RexB type 2 subfamily. In terms of assembly, heterodimer of AddA and RexB. Requires Mg(2+) as cofactor.

Functionally, the heterodimer acts as both an ATP-dependent DNA helicase and an ATP-dependent, dual-direction single-stranded exonuclease. Recognizes the chi site generating a DNA molecule suitable for the initiation of homologous recombination. This subunit has 5' -&gt; 3' nuclease activity but not helicase activity. This chain is ATP-dependent helicase/deoxyribonuclease subunit B, found in Latilactobacillus sakei subsp. sakei (strain 23K) (Lactobacillus sakei subsp. sakei).